We begin with the raw amino-acid sequence, 348 residues long: Rhodopsin (348 aa).

Methionine 1 carries the post-translational modification N-acetylmethionine. The Extracellular portion of the chain corresponds to 1–36 (MNGTEGPNFYVPFSNKTGVVRSPFEYPQYYLAEPWQ). Residues asparagine 2 and asparagine 15 are each glycosylated (N-linked (GlcNAc...) asparagine). Residues 37–61 (FSMLAAYMFLLIVLGFPINFLTLYV) traverse the membrane as a helical segment. Residues 62 to 73 (TVQHKKLRTPLN) lie on the Cytoplasmic side of the membrane. A helical transmembrane segment spans residues 74 to 96 (YILLNLAVADLFMVFGGFTTTLY). Topologically, residues 97–110 (TSLHGYFVFGPTGC) are extracellular. Cysteine 110 and cysteine 187 are disulfide-bonded. A helical transmembrane segment spans residues 111–133 (NVEGFFATLGGEIALWSLVVLAI). The short motif at 134 to 136 (ERY) is the 'Ionic lock' involved in activated form stabilization element. Over 134 to 152 (ERYVVVCKPMSNFRFGENH) the chain is Cytoplasmic. Residues 153–173 (AIMGVAFTWVMALACAAPPLA) traverse the membrane as a helical segment. The Extracellular portion of the chain corresponds to 174–202 (GWSRYIPEGMQCSCGIDYYTLKPEINNES). Glutamate 201 is a binding site for Zn(2+). Residues 203 to 224 (FVIYMFVVHFAIPMIVIFFCYG) form a helical membrane-spanning segment. The Cytoplasmic segment spans residues 225 to 252 (QLVFTVKEAAAQQQESATTQKAEKEVTR). Residues 253–274 (MVIIMVIAFLICWVPYASVAFY) traverse the membrane as a helical segment. The Extracellular segment spans residues 275–286 (IFTHQGSDFGPI). Zn(2+) is bound at residue glutamine 279. The chain crosses the membrane as a helical span at residues 287 to 308 (FMTLPAFFAKSSSIYNPVIYIM). Position 296 is an N6-(retinylidene)lysine (lysine 296). The Cytoplasmic segment spans residues 309-348 (MNKQFRNCMITTLCCGKNPLGDDEASASASKTETSQVAPA). 2 S-palmitoyl cysteine lipidation sites follow: cysteine 322 and cysteine 323. Positions 330–348 (DDEASASASKTETSQVAPA) are interaction with SAG. 2 positions are modified to phosphoserine: serine 334 and serine 338. 2 positions are modified to phosphothreonine: threonine 340 and threonine 342. A Phosphoserine modification is found at serine 343.

Belongs to the G-protein coupled receptor 1 family. Opsin subfamily. In terms of assembly, homodimer. May form a complex composed of RHO, GRK1 and RCVRN in a Ca(2+)-dependent manner; RCVRN prevents the interaction between GRK1 and RHO. Interacts with GRK1. Interacts (phosphorylated form) with SAG. Interacts with GNAT1. Interacts with GNAT3. SAG and G-proteins compete for a common binding site. Interacts with PRCD; the interaction promotes PRCD stability. Forms a complex with ASAP1 and ARF4. Forms a complex with ASAP1, RAB11A, Rabin8/RAB3IP, ARF4 and RAB11FIP3; the complex regulates Golgi-to-cilia rhodopsin/RHO transport in photoreceptors. In terms of processing, phosphorylated on some or all of the serine and threonine residues present in the C-terminal region. Post-translationally, contains one covalently linked retinal chromophore. Upon light absorption, the covalently bound 11-cis-retinal is converted to all-trans-retinal. After hydrolysis of the Schiff base and release of the covalently bound all-trans-retinal, active rhodopsin is regenerated by binding of a fresh molecule of 11-cis-retinal.

It is found in the membrane. The protein resides in the cell projection. It localises to the cilium. The protein localises to the photoreceptor outer segment. Its function is as follows. Photoreceptor required for image-forming vision at low light intensity. Required for photoreceptor cell viability after birth. Light-induced isomerization of 11-cis to all-trans retinal triggers a conformational change that activates signaling via G-proteins. Subsequent receptor phosphorylation mediates displacement of the bound G-protein alpha subunit by the arrestin SAG and terminates signaling. This is Rhodopsin (RHO) from Canis lupus familiaris (Dog).